The primary structure comprises 310 residues: Small ribosomal subunit protein uS2 (310 aa).

Over residues 249–272 (WERDLLEGEKAEKKDDAEAAEKPA) the composition is skewed to basic and acidic residues. The interval 249–310 (WERDLLEGEK…EAPAADAEQA (62 aa)) is disordered. Positions 273–310 (EAPAAEAPAAEAAEAPAAEAAPAEEPAAEAPAADAEQA) are enriched in low complexity.

This sequence belongs to the universal ribosomal protein uS2 family.

The polypeptide is Small ribosomal subunit protein uS2 (rpsB) (Streptomyces coelicolor (strain ATCC BAA-471 / A3(2) / M145)).